Consider the following 232-residue polypeptide: Early E1A protein (232 aa).

The tract at residues 40–48 (PTLHDLFDV) is interaction with RB1 in competition with E2F1. The segment covering 69–84 (TDSSASTEADSGFSPL) has biased composition (low complexity). The segment at 69-97 (TDSSASTEADSGFSPLSTPPVSPIPPHPT) is disordered. Residues 85–97 (STPPVSPIPPHPT) show a composition bias toward pro residues. Positions 107-111 (LLCLE) match the LXCXE motif, interaction with host RB1 motif. Residues 146–164 (CLRCAFYQEQDDNALCGLC) fold into a zinc finger. The tract at residues 175–232 (SAGAEEEDDEVIFVSAKPGGRKRSAATPCEPDGVSKRPCVPEPEQTEPLDLSLKPRPN) is disordered. Residues 222-226 (PLDLS) carry the PXDLS motif, CTBP-binding motif. The Nuclear localization signal signature appears at 228-232 (KPRPN).

It belongs to the adenoviridae E1A protein family. Interacts with host UBE2I; this interaction interferes with polySUMOylation. Interacts with host RB1; this interaction induces the aberrant dissociation of RB1-E2F1 complex thereby disrupting the activity of RB1 and activating E2F1-regulated genes. Interacts with host ATF7; the interaction enhances ATF7-mediated viral transactivation activity which requires the zinc binding domains of both proteins. Isoform early E1A 32 kDa protein and isoform early E1A 26 kDa protein interact (via N-terminus) with CUL1 and E3 ubiquitin ligase RBX1; these interactions inhibit RBX1-CUL1-dependent elongation reaction of ubiquitin chains and attenuate ubiquitination of SCF(FBXW7) target proteins. Interacts (via PXLXP motif) with host ZMYND11/BS69 (via MYND-type zinc finger); this interaction inhibits E1A mediated transactivation. Interacts with host EP300; this interaction stimulates the acetylation of RB1 by recruiting EP300 and RB1 into a multimeric-protein complex. Interacts with host CTBP1 and CTBP2; this interaction seems to potentiate viral replication. Interacts with host DCAF7. Interacts with host DYRK1A. Interacts with host KPNA4; this interaction allows E1A import into the host nucleus. Interacts with host EP400; this interaction stabilizes MYC. Interacts with host TBP protein; this interaction probably disrupts the TBP-TATA complex.

The protein resides in the host nucleus. Functionally, plays a role in viral genome replication by driving entry of quiescent cells into the cell cycle. Stimulation of progression from G1 to S phase allows the virus to efficiently use the cellular DNA replicating machinery to achieve viral genome replication. E1A protein has both transforming and trans-activating activities. Induces the disassembly of the E2F1 transcription factor from RB1 by direct competition for the same binding site on RB1, with subsequent transcriptional activation of E2F1-regulated S-phase genes and of the E2 region of the adenoviral genome. Release of E2F1 leads to the ARF-mediated inhibition of MDM2 and causes TP53/p53 to accumulate because it is not targeted for degradation by MDM2-mediated ubiquitination anymore. This increase in TP53, in turn, would arrest the cell proliferation and direct its death but this effect is counteracted by the viral protein E1B-55K. Inactivation of the ability of RB1 to arrest the cell cycle is critical for cellular transformation, uncontrolled cellular growth and proliferation induced by viral infection. Interaction with RBX1 and CUL1 inhibits ubiquitination of the proteins targeted by SCF(FBXW7) ubiquitin ligase complex, and may be linked to unregulated host cell proliferation. The tumorigenesis-restraining activity of E1A may be related to the disruption of the host CtBP-CtIP complex through the CtBP binding motif. This is Early E1A protein from Canine adenovirus serotype 2 (strain Toronto A 26-61) (CAdV-2).